The following is a 1199-amino-acid chain: DNA-directed RNA polymerase subunit beta (1199 aa).

Positions 1175–1199 (EEKKAHEAAAQATDGKSANSTDDKK) are disordered. The segment covering 1188–1199 (DGKSANSTDDKK) has biased composition (polar residues).

This sequence belongs to the RNA polymerase beta chain family. As to quaternary structure, the RNAP catalytic core consists of 2 alpha, 1 beta, 1 beta' and 1 omega subunit. When a sigma factor is associated with the core the holoenzyme is formed, which can initiate transcription.

The catalysed reaction is RNA(n) + a ribonucleoside 5'-triphosphate = RNA(n+1) + diphosphate. DNA-dependent RNA polymerase catalyzes the transcription of DNA into RNA using the four ribonucleoside triphosphates as substrates. The polypeptide is DNA-directed RNA polymerase subunit beta (Lacticaseibacillus paracasei (strain ATCC 334 / BCRC 17002 / CCUG 31169 / CIP 107868 / KCTC 3260 / NRRL B-441) (Lactobacillus paracasei)).